Here is a 341-residue protein sequence, read N- to C-terminus: uncharacterized protein (341 aa).

Active-site residues include serine 111, aspartate 247, and histidine 275.

Belongs to the DmpD/TodF/XylF esterase family.

This is an uncharacterized protein from Mycobacterium bovis (strain ATCC BAA-935 / AF2122/97).